The following is a 453-amino-acid chain: Oocyte zinc finger protein XlCOF6 (453 aa).

14 C2H2-type zinc fingers span residues 6-29, 67-89, 95-117, 123-145, 151-173, 179-201, 207-229, 235-257, 263-285, 291-313, 319-341, 375-397, 403-425, and 431-453; these read FICSKCGETFTVNSHLLTHLCGKH, FTCTECGKSFSERDNLKCHHKTH, FTCMECGKGFSVKSSLKHHYKAH, VRCTECGKEFTSKYYLNVHKRLH, FTCTQCGKCFSDKSALKYHHKTH, FACTECGKSFTEKSILQKHQRTH, FTCTECGKSYSAMSTLECHRRTH, FTCTECGKSFTEKSILRKHHKTH, FTCTECGKSCTEKSILRKHQITH, FTCTECGKCFSDKTALKYHHKTH, FACTECGKSFTDKSILRNHQRTH, FTCTECGKSFTHKSILQKHQRTH, and FTCTECGKCFSDKTAIKYHRITH.

It belongs to the krueppel C2H2-type zinc-finger protein family.

It is found in the nucleus. May be involved in transcriptional regulation. The sequence is that of Oocyte zinc finger protein XlCOF6 from Xenopus laevis (African clawed frog).